The following is a 307-amino-acid chain: Mitochondrial glycine transporter (307 aa).

Solcar repeat units follow at residues 8–87 (PRNS…MRSS), 115–199 (LTMY…SKQL), and 221–305 (TSTT…LVKR). 6 consecutive transmembrane segments (helical) span residues 14 to 39 (LIGG…TRIQ), 62 to 88 (GTLP…RSSL), 121 to 146 (LLTG…VRYE), 174 to 197 (GFGA…EKSK), 225 to 251 (VNTT…KTRM), and 280 to 298 (GLSM…AWGI).

This sequence belongs to the mitochondrial carrier (TC 2.A.29) family. SLC25A38 subfamily.

It localises to the mitochondrion. It is found in the mitochondrion inner membrane. The enzyme catalyses glycine(in) = glycine(out). In terms of biological role, mitochondrial glycine transporter that imports glycine into the mitochondrial matrix. Plays an important role in providing glycine for the first enzymatic step in heme biosynthesis, the condensation of glycine with succinyl-CoA to produce 5-aminolevulinate (ALA) in the mitochondrial matrix. This Saccharomyces cerevisiae (strain ATCC 204508 / S288c) (Baker's yeast) protein is Mitochondrial glycine transporter.